We begin with the raw amino-acid sequence, 361 residues long: MQTLTVELGDRSYPIHIGRGLLDDPTRFAPRIRGKRVMIVTNETVAPLYLDRLKRTLGDFRVEAVILPDGEEYKTMETLNQVYTALLEARFDRKATLVALGGGVIGDITGFAAASYQRGVDFIQVPTTLLSQVDSSVGGKTGVNHPLGKNMIGAFHQPRCVVIDTDTLDTLPDRELRAGIAEVIKYGLICDRPFFDWLEANMDRLLARDPEALAYAIHRSCHDKAQVVAEDEREGGRRAILNLGHTFGHAIETGMGYGVWLHGEGVATGMVMAARMSRRLGWLDAEDLHRTEALIARAGLPVEPPPEITAERFAELMSVDKKVLDGQLRLVLLRGIGEAVVTADFDPAALDATLNQVGSGN.

Residues 69–74 (DGEEYK), 103–107 (GVIGD), 127–128 (TT), Lys-140, Lys-149, and 167–170 (TLDT) contribute to the NAD(+) site. Residues Glu-182, His-245, and His-262 each contribute to the Zn(2+) site.

It belongs to the sugar phosphate cyclases superfamily. Dehydroquinate synthase family. It depends on Co(2+) as a cofactor. Zn(2+) is required as a cofactor. Requires NAD(+) as cofactor.

Its subcellular location is the cytoplasm. It carries out the reaction 7-phospho-2-dehydro-3-deoxy-D-arabino-heptonate = 3-dehydroquinate + phosphate. It participates in metabolic intermediate biosynthesis; chorismate biosynthesis; chorismate from D-erythrose 4-phosphate and phosphoenolpyruvate: step 2/7. Its function is as follows. Catalyzes the conversion of 3-deoxy-D-arabino-heptulosonate 7-phosphate (DAHP) to dehydroquinate (DHQ). This is 3-dehydroquinate synthase from Thioalkalivibrio sulfidiphilus (strain HL-EbGR7).